The sequence spans 223 residues: Putative NAD(P)H nitroreductase SAUSA300_2462 (223 aa).

Belongs to the nitroreductase family. It depends on FMN as a cofactor.

The polypeptide is Putative NAD(P)H nitroreductase SAUSA300_2462 (Staphylococcus aureus (strain USA300)).